Consider the following 578-residue polypeptide: A-type ATP synthase subunit A (578 aa).

228–235 (GPFGSGKT) provides a ligand contact to ATP.

The protein belongs to the ATPase alpha/beta chains family. Has multiple subunits with at least A(3), B(3), C, D, E, F, H, I and proteolipid K(x).

The protein resides in the cell membrane. The catalysed reaction is ATP + H2O + 4 H(+)(in) = ADP + phosphate + 5 H(+)(out). Component of the A-type ATP synthase that produces ATP from ADP in the presence of a proton gradient across the membrane. The A chain is the catalytic subunit. In Methanococcoides burtonii (strain DSM 6242 / NBRC 107633 / OCM 468 / ACE-M), this protein is A-type ATP synthase subunit A.